The primary structure comprises 255 residues: Zinc import ATP-binding protein ZnuC (255 aa).

The 216-residue stretch at 5 to 220 (VALEHIAVAF…PDFIAMFGYR (216 aa)) folds into the ABC transporter domain.

Belongs to the ABC transporter superfamily. Zinc importer (TC 3.A.1.15.5) family. As to quaternary structure, the complex is composed of two ATP-binding proteins (ZnuC), two transmembrane proteins (ZnuB) and a solute-binding protein (ZnuA).

It is found in the cell inner membrane. The catalysed reaction is Zn(2+)(out) + ATP(in) + H2O(in) = Zn(2+)(in) + ADP(in) + phosphate(in) + H(+)(in). In terms of biological role, part of the ABC transporter complex ZnuABC involved in zinc import. Responsible for energy coupling to the transport system. The sequence is that of Zinc import ATP-binding protein ZnuC from Sodalis glossinidius (strain morsitans).